Here is a 227-residue protein sequence, read N- to C-terminus: Esterase OVCA2 (227 aa).

The interval 44–68 (GPHPVPDPPGPEGARSDFGSCPPEE) is disordered. Catalysis depends on charge relay system residues serine 119, aspartate 179, and histidine 206.

This sequence belongs to the LovG family. Proteolytically degraded in response to RA and 4HPR treatment in a time- and dose-dependent manner in the promyelocytic leukemia cell line HL-60. Ubiquitously expressed.

It carries out the reaction a carboxylic ester + H2O = an alcohol + a carboxylate + H(+). Its function is as follows. Exhibits ester hydrolase activity with a strong preference for long-chain alkyl ester substrates and high selectivity against a variety of short, branched, and substituted esters. Is able to hydrolyze ester bonds within a wide range of p-nitrophenyl derivatives (C2-C14) in vitro, with a strong preference toward substrates of &gt;8 carbons. This is Esterase OVCA2 from Homo sapiens (Human).